We begin with the raw amino-acid sequence, 332 residues long: Holliday junction branch migration complex subunit RuvB (332 aa).

Residues 1-181 (MERIISELEM…FGVSHKMEYY (181 aa)) form a large ATPase domain (RuvB-L) region. L20, R21, G62, K65, T66, T67, R171, Y181, and R218 together coordinate ATP. T66 contributes to the Mg(2+) binding site. The small ATPAse domain (RuvB-S) stretch occupies residues 182–252 (NENEIKSIII…SAKNALDMLG (71 aa)). The head domain (RuvB-H) stretch occupies residues 255-332 (SNGLDDLDRN…QHFKKVEVKI (78 aa)). The DNA site is built by R291, R310, and R315.

The protein belongs to the RuvB family. Homohexamer. Forms an RuvA(8)-RuvB(12)-Holliday junction (HJ) complex. HJ DNA is sandwiched between 2 RuvA tetramers; dsDNA enters through RuvA and exits via RuvB. An RuvB hexamer assembles on each DNA strand where it exits the tetramer. Each RuvB hexamer is contacted by two RuvA subunits (via domain III) on 2 adjacent RuvB subunits; this complex drives branch migration. In the full resolvosome a probable DNA-RuvA(4)-RuvB(12)-RuvC(2) complex forms which resolves the HJ.

It is found in the cytoplasm. The catalysed reaction is ATP + H2O = ADP + phosphate + H(+). In terms of biological role, the RuvA-RuvB-RuvC complex processes Holliday junction (HJ) DNA during genetic recombination and DNA repair, while the RuvA-RuvB complex plays an important role in the rescue of blocked DNA replication forks via replication fork reversal (RFR). RuvA specifically binds to HJ cruciform DNA, conferring on it an open structure. The RuvB hexamer acts as an ATP-dependent pump, pulling dsDNA into and through the RuvAB complex. RuvB forms 2 homohexamers on either side of HJ DNA bound by 1 or 2 RuvA tetramers; 4 subunits per hexamer contact DNA at a time. Coordinated motions by a converter formed by DNA-disengaged RuvB subunits stimulates ATP hydrolysis and nucleotide exchange. Immobilization of the converter enables RuvB to convert the ATP-contained energy into a lever motion, pulling 2 nucleotides of DNA out of the RuvA tetramer per ATP hydrolyzed, thus driving DNA branch migration. The RuvB motors rotate together with the DNA substrate, which together with the progressing nucleotide cycle form the mechanistic basis for DNA recombination by continuous HJ branch migration. Branch migration allows RuvC to scan DNA until it finds its consensus sequence, where it cleaves and resolves cruciform DNA. The polypeptide is Holliday junction branch migration complex subunit RuvB (Fusobacterium nucleatum subsp. nucleatum (strain ATCC 25586 / DSM 15643 / BCRC 10681 / CIP 101130 / JCM 8532 / KCTC 2640 / LMG 13131 / VPI 4355)).